The chain runs to 299 residues: Peroxisomal biogenesis factor 19 (299 aa).

Residues 1 to 61 (MAAAEEGCGV…KRAPGDTAKD (61 aa)) are disordered. At alanine 2 the chain carries N-acetylalanine. Residues 2–56 (AAAEEGCGVGVEDDRELEELLESALDDFDKAKPSPEHAPTISAPDASGPQKRAPG) are docking to the peroxisome membrane and binding to PEX3. The segment at 2–91 (AAAEEGCGVG…QATAEFEKAM (90 aa)) is necessary for PEX19 function on peroxisome biogenesis. Positions 12 to 27 (VEDDRELEELLESALD) are enriched in acidic residues. 2 positions are modified to phosphoserine: serine 35 and serine 66. Threonine 236 is modified (phosphothreonine). Cysteine 296 is modified (cysteine methyl ester). Residue cysteine 296 is the site of S-farnesyl cysteine attachment. The propeptide at 297–299 (LIM) is removed in mature form.

It belongs to the peroxin-19 family. In terms of assembly, interacts with a broad range of peroxisomal membrane proteins, including PEX3, PEX10, PEX11A, PEX11B, PEX12, PEX13, PEX14 and PEX16, PXMP2/PMP22, PXMP4/PMP24, SLC25A17/PMP34, ABCD1/ALDP, ABCD2/ALDRP, and ABCD3/PMP70. Also interacts with the tumor suppressor CDKN2A/p19ARF.

Its subcellular location is the cytoplasm. The protein resides in the peroxisome membrane. In terms of biological role, necessary for early peroxisomal biogenesis. Acts both as a cytosolic chaperone and as an import receptor for peroxisomal membrane proteins (PMPs). Binds and stabilizes newly synthesized PMPs in the cytoplasm by interacting with their hydrophobic membrane-spanning domains, and targets them to the peroxisome membrane by binding to the integral membrane protein PEX3. Excludes CDKN2A from the nucleus and prevents its interaction with MDM2, which results in active degradation of TP53. The sequence is that of Peroxisomal biogenesis factor 19 (Pex19) from Mus musculus (Mouse).